We begin with the raw amino-acid sequence, 264 residues long: Rano class II histocompatibility antigen, D-1 beta chain (264 aa).

An N-terminal signal peptide occupies residues 1–26 (MVWLARDSCVAAVILLLTVLSPPVAL). Residues 27-120 (VRDPTPRFLE…EISESFLVPR (94 aa)) form a beta-1 region. The Extracellular portion of the chain corresponds to 27–226 (VRDPTPRFLE…AQSTSAQNKK (200 aa)). Cystine bridges form between cysteine 42–cysteine 106 and cysteine 144–cysteine 200. N-linked (GlcNAc...) asparagine glycosylation occurs at asparagine 46. The beta-2 stretch occupies residues 121–215 (TVEPKVTVYP…SLPSPVRVEW (95 aa)). The Ig-like C1-type domain maps to 124 to 228 (PKVTVYPSKT…STSAQNKKMS (105 aa)). The interval 216-226 (KAQSTSAQNKK) is connecting peptide. The chain crosses the membrane as a helical span at residues 227 to 248 (MSGVGGIVLGLLFLGAGLFVYF). Topologically, residues 249–264 (RNQKGQSGLQPTGLLN) are cytoplasmic.

This sequence belongs to the MHC class II family.

It localises to the membrane. Its function is as follows. Involved in the presentation of foreign antigens to the immune system. This chain is Rano class II histocompatibility antigen, D-1 beta chain (RT1-Db1), found in Rattus norvegicus (Rat).